Consider the following 263-residue polypeptide: Acyl-[acyl-carrier-protein]--UDP-N-acetylglucosamine O-acyltransferase (263 aa).

It belongs to the transferase hexapeptide repeat family. LpxA subfamily. As to quaternary structure, homotrimer.

It is found in the cytoplasm. The enzyme catalyses a (3R)-hydroxyacyl-[ACP] + UDP-N-acetyl-alpha-D-glucosamine = a UDP-3-O-[(3R)-3-hydroxyacyl]-N-acetyl-alpha-D-glucosamine + holo-[ACP]. It participates in glycolipid biosynthesis; lipid IV(A) biosynthesis; lipid IV(A) from (3R)-3-hydroxytetradecanoyl-[acyl-carrier-protein] and UDP-N-acetyl-alpha-D-glucosamine: step 1/6. Functionally, involved in the biosynthesis of lipid A, a phosphorylated glycolipid that anchors the lipopolysaccharide to the outer membrane of the cell. The protein is Acyl-[acyl-carrier-protein]--UDP-N-acetylglucosamine O-acyltransferase of Campylobacter jejuni subsp. jejuni serotype O:2 (strain ATCC 700819 / NCTC 11168).